The primary structure comprises 510 residues: ATP synthase subunit alpha, mitochondrial (510 aa).

ATP is bound at residue G171–T178.

In terms of assembly, F-type ATP synthases have 2 components, the catalytic core F(1) and the membrane-embedded component F(0), linked together by a central stalk and a peripheral stalk. The central stalk, also called rotor shaft, is often seen as part of F(1). The peripheral stalk is seen as part of F(0). F(0) contains the membrane channel next to the rotor. F-type ATP synthases form dimers but each monomer functions independently in ATP generation. The dimer consists of 18 different polypeptides: ATP1 (subunit alpha, part of F(1), 3 molecules per monomer), ATP2 (subunit beta, part of F(1), 3 molecules per monomer), ATP3 (subunit gamma, part of the central stalk), ATP4 (subunit b, part of the peripheral stalk), ATP5/OSCP (subunit 5/OSCP, part of the peripheral stalk), ATP6 (subunit a, part of the peripheral stalk), ATP7 (subunit d, part of the peripheral stalk), ATP8 (subunit 8, part of the peripheral stalk), OLI1 (subunit c, part of the rotor, 10 molecules per monomer), ATP14 (subunit h, part of the peripheral stalk), ATP15 (subunit epsilon, part of the central stalk), ATP16 (subunit delta, part of the central stalk), ATP17 (subunit f, part of the peripheral stalk), ATP18 (subunit i/j, part of the peripheral stalk). Dimer-specific subunits are ATP19 (subunit k, at interface between monomers), ATP20 (subunit g, at interface between monomers), TIM11 (subunit e, at interface between monomers). Also contains subunit L.

The protein localises to the mitochondrion inner membrane. Functionally, mitochondrial membrane ATP synthase (F(1)F(0) ATP synthase or Complex V) produces ATP from ADP in the presence of a proton gradient across the membrane which is generated by electron transport complexes of the respiratory chain. F-type ATP synthases consist of two structural domains, F(1) - containing the extramembraneous catalytic core, and F(0) - containing the membrane proton channel, linked together by a central stalk and a peripheral stalk. During catalysis, ATP synthesis in the catalytic domain of F(1) is coupled via a rotary mechanism of the central stalk subunits to proton translocation. Subunits alpha/ATP1 and beta/ATP2 form the catalytic core in F(1). Rotation of the central stalk against the surrounding alpha/ATP1(3)beta/ATP2(3) subunits leads to hydrolysis of ATP in three separate catalytic sites on the beta/ATP2 subunits. Subunit alpha/ATP1 does not bear the catalytic high-affinity ATP-binding sites. This is ATP synthase subunit alpha, mitochondrial from Pichia angusta (Yeast).